The primary structure comprises 142 residues: Transcriptional regulator MraZ (142 aa).

SpoVT-AbrB domains follow at residues 5–47 (EYPY…PLPG) and 76–119 (ASKA…NPQR).

It belongs to the MraZ family. As to quaternary structure, forms oligomers.

Its subcellular location is the cytoplasm. It localises to the nucleoid. This chain is Transcriptional regulator MraZ, found in Deinococcus radiodurans (strain ATCC 13939 / DSM 20539 / JCM 16871 / CCUG 27074 / LMG 4051 / NBRC 15346 / NCIMB 9279 / VKM B-1422 / R1).